Here is a 408-residue protein sequence, read N- to C-terminus: Exo-alpha-sialidase ARB_03431 (408 aa).

Positions 1-22 (MGIKQWLLSLVVVAISATATQA) are cleaved as a signal peptide. Residues R62, R81, D87, and Q150 each coordinate substrate. N237 is a glycosylation site (N-linked (GlcNAc...) asparagine). Substrate-binding positions include R267, R324, 324–325 (RT), 333–334 (YD), K339, Y360, D378, and 378–380 (DWY). A glycan (N-linked (GlcNAc...) asparagine) is linked at N398.

This sequence belongs to the glycosyl hydrolase 33 family.

The protein resides in the secreted. The enzyme catalyses Hydrolysis of alpha-(2-&gt;3)-, alpha-(2-&gt;6)-, alpha-(2-&gt;8)- glycosidic linkages of terminal sialic acid residues in oligosaccharides, glycoproteins, glycolipids, colominic acid and synthetic substrates.. Functionally, sialidase is able to release sialic acid from a wide variety of natural substrates. The protein is Exo-alpha-sialidase ARB_03431 of Arthroderma benhamiae (strain ATCC MYA-4681 / CBS 112371) (Trichophyton mentagrophytes).